Here is a 346-residue protein sequence, read N- to C-terminus: Small ribosomal subunit biogenesis GTPase RsgA 2 (346 aa).

Residues 93–248 (EEQLIAANFD…VIDTPGMREF (156 aa)) enclose the CP-type G domain. Residues 138 to 141 (TKAD) and 190 to 198 (GSSGVGKSS) contribute to the GTP site. Zn(2+) is bound by residues cysteine 271, cysteine 276, histidine 278, and cysteine 284.

It belongs to the TRAFAC class YlqF/YawG GTPase family. RsgA subfamily. As to quaternary structure, monomer. Associates with 30S ribosomal subunit, binds 16S rRNA. Requires Zn(2+) as cofactor.

Its subcellular location is the cytoplasm. In terms of biological role, one of several proteins that assist in the late maturation steps of the functional core of the 30S ribosomal subunit. Helps release RbfA from mature subunits. May play a role in the assembly of ribosomal proteins into the subunit. Circularly permuted GTPase that catalyzes slow GTP hydrolysis, GTPase activity is stimulated by the 30S ribosomal subunit. In Listeria monocytogenes serotype 4b (strain F2365), this protein is Small ribosomal subunit biogenesis GTPase RsgA 2.